The primary structure comprises 151 residues: Calcium-binding protein SPEC 2C (151 aa).

EF-hand domains follow at residues 10-45 (EQRKVFKSSFKSIDADGDGKITPEELKAAFKSIEIE), 46-78 (LTQEKIDEMMSMVDKDGSRPVDFSEILMKKAEQ), 81-116 (GKGAQYFKAFDALDTDKSGSLSPEELRTALSACTDP), and 118-151 (MTKEEIDAIIKKADGNNDGEIRRAEFVRMIQSSY). Ca(2+) is bound by residues Asp23, Asp25, Asp27, Lys29, Glu34, Asp59, Asp61, Ser63, Glu70, Asp94, Asp96, Ser98, Ser100, Glu105, Asp131, Asp135, Glu137, and Glu142.

Found in cell lineages giving rise to the aboral ectoderm, a squamous epithelium covering the surface of the late stage embryo and larva.

In terms of biological role, calcium-binding protein involved in larval development and metamorphosis. Likely to function as calcium buffers mediating the transport of calcium from the sea water to the blastocoel where calcium is required for skeleton formation. The sequence is that of Calcium-binding protein SPEC 2C (SPEC2C) from Strongylocentrotus purpuratus (Purple sea urchin).